An 873-amino-acid chain; its full sequence is DNA mismatch repair protein PMS1 (873 aa).

The segment at 1–357 (MTQIHQINDI…FKTTLSDYYN (357 aa)) is DNA- and ATP-binding. Residues 379 to 402 (LKTEVFDDRSTTHESDNENYHTAR) are compositionally biased toward basic and acidic residues. Residues 379-423 (LKTEVFDDRSTTHESDNENYHTARSESNQSNHAHFNSTTGVIDKS) are disordered. Phosphoserine is present on S393. Positions 403 to 423 (SESNQSNHAHFNSTTGVIDKS) are enriched in polar residues. The residue at position 566 (S566) is a Phosphoserine. The segment at 661 to 873 (YLTLTVSKND…WSSFSKDYEI (213 aa)) is interaction with MLH1.

Belongs to the DNA mismatch repair MutL/HexB family. In terms of assembly, heterodimer of MLH1 and PMS1, called MutLalpha, which is the major MMR MutL activity correcting base-base mismatches as well as IDLs. The heterodimer binds double strand DNA independently of a mismatch with positive cooperativity and has more than one DNA binding site. Forms a ternary complex with either the MSH2-MSH6 (MutSalpha) or the MSH2-MSH3 heterodimer (MutSbeta), which recognize and bind to mismatch DNA. Ternary complex formation is promoted by ATP binding.

It localises to the nucleus. Its function is as follows. Required for DNA mismatch repair (MMR), correcting base-base mismatches and insertion-deletion loops (IDLs) resulting from DNA replication, DNA damage or from recombination events between non-identical sequences during meiosis. Component of the MutLalpha heterodimer that forms a ternary complex with the MutS heterodimers, which initially recognize the DNA mismatches. This complex is thought to be responsible for directing the downstream MMR events, including strand discrimination, excision, and resynthesis. Plays a major role in maintaining the genetic stability of simple sequence repeats and in the repair of heteroduplex sites present in meiotic recombination intermediates. The protein is DNA mismatch repair protein PMS1 (PMS1) of Saccharomyces cerevisiae (strain ATCC 204508 / S288c) (Baker's yeast).